A 125-amino-acid chain; its full sequence is Protein ApaG (125 aa).

An ApaG domain is found at 3 to 125 (TAVTEGIEVT…FPLVVPGSLN (123 aa)).

The polypeptide is Protein ApaG (Anaeromyxobacter dehalogenans (strain 2CP-C)).